Here is a 140-residue protein sequence, read N- to C-terminus: Sex-regulated protein janus-B (140 aa).

Arginine 42 is a binding site for substrate. Residue histidine 69 is the Proton acceptor of the active site. Position 110–112 (110–112 (CKT)) interacts with substrate.

Belongs to the janus family.

JanA and janB regulate somatic sex differentiation. This chain is Sex-regulated protein janus-B (janB), found in Drosophila pseudoobscura pseudoobscura (Fruit fly).